The primary structure comprises 1155 residues: DNA-directed RNA polymerase subunit beta (1155 aa).

The protein belongs to the RNA polymerase beta chain family. As to quaternary structure, the RNAP catalytic core consists of 2 alpha, 1 beta, 1 beta' and 1 omega subunit. When a sigma factor is associated with the core the holoenzyme is formed, which can initiate transcription.

The catalysed reaction is RNA(n) + a ribonucleoside 5'-triphosphate = RNA(n+1) + diphosphate. DNA-dependent RNA polymerase catalyzes the transcription of DNA into RNA using the four ribonucleoside triphosphates as substrates. The sequence is that of DNA-directed RNA polymerase subunit beta from Borreliella afzelii (strain PKo) (Borrelia afzelii).